The sequence spans 325 residues: Outer spore wall protein LDS1 (325 aa).

Residues 1–91 (MSFTGSLALA…NTNKSSYSTT (91 aa)) are Cytoplasmic-facing. A helical transmembrane segment spans residues 92-112 (MLGILSSYLIMFALVSFVYWA). At 113 to 118 (TITPMY) the chain is on the extracellular side. A helical membrane pass occupies residues 119–139 (TAFLIVLGPIGLFIAIFHSFL). Over 140–208 (QANVFTLLFM…VKYMLGLSVL (69 aa)) the chain is Cytoplasmic. A helical membrane pass occupies residues 209-229 (FVLLVISFFPLIGPILFHILI). Residues 230–263 (SPFITQIYFTKVLRLQNFDNIQRRENIYLHAGQY) lie on the Extracellular side of the membrane. Residues 264–284 (ASFGFLAGLIESVPILAGFAI) traverse the membrane as a helical segment. Over 285 to 325 (STNTIGSVLFNLDHPMVPENLVETQAEIEAAPQDINQQPNQ) the chain is Cytoplasmic.

The protein belongs to the LDS family.

It is found in the prospore membrane. Its subcellular location is the lipid droplet. It localises to the spore wall. Functionally, involved in spore wall assembly. This chain is Outer spore wall protein LDS1, found in Saccharomyces cerevisiae (strain ATCC 204508 / S288c) (Baker's yeast).